The following is a 192-amino-acid chain: Protein GrpE (192 aa).

The tract at residues 1–41 (MSKEEFPHEKDLKDEVTPDKAPKKDPKAAPKEEVKENPVEN) is disordered.

It belongs to the GrpE family. In terms of assembly, homodimer.

Its subcellular location is the cytoplasm. Functionally, participates actively in the response to hyperosmotic and heat shock by preventing the aggregation of stress-denatured proteins, in association with DnaK and GrpE. It is the nucleotide exchange factor for DnaK and may function as a thermosensor. Unfolded proteins bind initially to DnaJ; upon interaction with the DnaJ-bound protein, DnaK hydrolyzes its bound ATP, resulting in the formation of a stable complex. GrpE releases ADP from DnaK; ATP binding to DnaK triggers the release of the substrate protein, thus completing the reaction cycle. Several rounds of ATP-dependent interactions between DnaJ, DnaK and GrpE are required for fully efficient folding. The chain is Protein GrpE from Lactobacillus johnsonii (strain CNCM I-12250 / La1 / NCC 533).